The sequence spans 329 residues: Serine/threonine-protein phosphatase PP2A catalytic subunit (329 aa).

A disordered region spans residues M1 to G25. Positions D8–H17 are enriched in basic and acidic residues. Mn(2+) is bound by residues D77, H79, D105, and N137. The Proton donor role is filled by H138. Mn(2+) is bound by residues H187 and H261. A Leucine methyl ester modification is found at L329.

This sequence belongs to the PPP phosphatase family. PP-2A subfamily. It depends on Mn(2+) as a cofactor.

It catalyses the reaction O-phospho-L-seryl-[protein] + H2O = L-seryl-[protein] + phosphate. The enzyme catalyses O-phospho-L-threonyl-[protein] + H2O = L-threonyl-[protein] + phosphate. In terms of biological role, involved in hyphal morphogenesis. This is Serine/threonine-protein phosphatase PP2A catalytic subunit (pphA) from Emericella nidulans (strain FGSC A4 / ATCC 38163 / CBS 112.46 / NRRL 194 / M139) (Aspergillus nidulans).